Consider the following 353-residue polypeptide: COMPASS component SPP1 (353 aa).

The segment at 22 to 72 (DVYCICKRPDYGELMVGCDGCDDWFHFTCLHIPEQFKDLVFSFYCPYCQAG) adopts a PHD-type zinc-finger fold. Residues Cys-25, Cys-27, Cys-39, Cys-42, His-47, Cys-50, Cys-66, and Cys-69 each contribute to the Zn(2+) site. The segment at 83–124 (NGEGSLPKTLWKRKCRISDCYKPCLQDSKYCSEEHGREFVND) is non coventional C3H-type zinc finger. Ser-87 is modified (phosphoserine). The Zn(2+) site is built by Cys-97, Cys-102, Cys-113, and His-117. The span at 235 to 244 (VECGKEDSKG) shows a compositional bias: basic and acidic residues. Residues 235–255 (VECGKEDSKGTKRKKKKNSSR) form a disordered region. Residues 245–255 (TKRKKKKNSSR) show a composition bias toward basic residues.

In terms of assembly, component of the Set1C/COMPASS complex which consists of SET1(2), BRE2(2), SPP1(2), SDC1(1), SHG1(1), SWD1(1), SWD2(1), and SWD3(1).

The protein localises to the nucleus. Its function is as follows. Component of the Set1C/COMPASS complex that specifically mono-, di- and trimethylates histone H3 to form H3K4me1/2/3, which subsequently plays a role in telomere length maintenance and transcription elongation regulation. COMPASS recognizes ubiquitinated H2B on one face of the nucleosome which stimulates the methylation of H3 on the opposing face. SPP1/CPS40 can recognize methylated histone lysine residue H3K4me3 or unmethylated H3K4. Stimulates the RNA binding activity of SET1. This Saccharomyces cerevisiae (strain ATCC 204508 / S288c) (Baker's yeast) protein is COMPASS component SPP1.